Reading from the N-terminus, the 969-residue chain is MEDYEEDLYGVEDDFQNQFAAELEVLAELEGTRDQAPPGTLQTPASRPPLTFEEAIAGGDTVPRPCPAGSPGNVNRNTRKNVRRDQPAPSSPMVKRPRLDVVKKLNFEPDMEELLYPDSPPGDITPPPSPEVFPEMLDAGYSDANADKDLMQTLPSPRNRNPVLRRPPILEDYINVTSTSGERAFLVLRADLIGPGVQNPLLDVHWRGCGQLDLLGVPFASLKEQVDSKRRQQLLEDAQQLSDTLHSLRSEGEEAVLEGPPAEEPAPGQNTAQHCLWVDEFAPQHYTELLSDDFTNRCLLKWLKLWDLVVFGRERPARKPRPGVETTRVGKEATAPGKWKSHEQALEEMLEAELDPSQRPRQKVALLCGPPGLGKTTLAHVVARHAGYCVVEMNASDDRSPEAFRTRIEAATQMESVLGVGGRPNCLVIDEIDGAPTAAINVLLGILNRKGPQEADQGGTAVAAGGRRRRAEGGLLTRPIICICNDQFTPSLRQLKQQALLLHVPPTLPSRLVQRLQEISLQHGMRSDPGALVALCEKTDNDIRACINTLQFLYGRGRRELSVKAVQTTHVGLKDQRKGLFSVWQEVFQLPRTQRRIVGQDLMLPAHALLLSNGDKGSLTLASQRFYHILRVTTSAGEHEKVVQGLFDNFLRLRLRDSSLSTVCCALDWLAFDDLLEQAAHRGQSFQLLCYLPFVPAAFHVLFASSHVPRITFPSSQQEAQTRMSQTRNHIQTLVSGMAPTTRSRATPQALVLDTLCLLLDVLAPKLRPVSTQLYSAHEKQQLSCLVGTMLAYSLTYHQERTPDGQYLYKLEPNVEEVCRFPELPARKPLTYQAKQLIAREIEMEKMRRAEALAWARSGPQVDQGSSGPASLWTDSGEKGTRQPAPRNHEQRLEHIMKRATVQEQPERDFFGRVVIRKVAVPSREVEAPQKDADEWRMGVAVGRSEVWFRFNEGVSNAVRRSLYIRDLL.

Residues 30–97 (EGTRDQAPPG…APSSPMVKRP (68 aa)) are disordered. Phosphothreonine is present on T51. Phosphoserine is present on S221. Disordered regions lie at residues 250–269 (SEGE…APGQ) and 318–340 (RKPR…GKWK). A compositionally biased stretch (low complexity) spans 257-268 (LEGPPAEEPAPG). An ATP-binding site is contributed by 369–376 (GPPGLGKT). The interval 856-889 (ARSGPQVDQGSSGPASLWTDSGEKGTRQPAPRNH) is disordered. The segment covering 876–889 (SGEKGTRQPAPRNH) has biased composition (basic and acidic residues).

It belongs to the activator 1 small subunits family. CTF18 subfamily. As to quaternary structure, component of the CTF18-RFC complex, which consists of CTF18, CTF8, DCC1, RFC2, RFC3, RFC4 and RFC5. During assembly of the CTF18-RFC complex, CTF18 may first assemble into a subcomplex with RFC2, RFC3, RFC4 and RFC5. CTF18 then interacts directly with CTF8, which in turn interacts with DCC1. The CTF18-RFC complex associates with PCNA and with DNA polymerase POLH. The CTF18-RFC complex does not interact with the Rad9/Rad1/Hus1 complex. CTF18 interacts with SMC1A and RAD21. Interacts with DDX11.

It is found in the nucleus. Functionally, chromosome cohesion factor involved in sister chromatid cohesion and fidelity of chromosome transmission. Component of one of the cell nuclear antigen loader complexes, CTF18-replication factor C (CTF18-RFC), which consists of CTF18, CTF8, DCC1, RFC2, RFC3, RFC4 and RFC5. The CTF18-RFC complex binds to single-stranded and primed DNAs and has weak ATPase activity that is stimulated by the presence of primed DNA, replication protein A (RPA) and by proliferating cell nuclear antigen (PCNA). The CTF18-RFC complex catalyzes the ATP-dependent loading of PCNA onto primed and gapped DNA. Interacts with and stimulates DNA polymerase POLH. During DNA repair synthesis, involved in loading DNA polymerase POLE at the sites of local damage. The sequence is that of Chromosome transmission fidelity protein 18 homolog (Chtf18) from Mus musculus (Mouse).